The primary structure comprises 33 residues: Dermaseptin-H6 (33 aa).

Leu-33 carries the post-translational modification Leucine amide.

Expressed by the skin glands.

It localises to the secreted. Has antimicrobial activity. The sequence is that of Dermaseptin-H6 from Pithecopus hypochondrialis (Orange-legged leaf frog).